The primary structure comprises 201 residues: Recombination protein RecR (201 aa).

A C4-type zinc finger spans residues 60-75 (CKRCGSYAETEICEIC). Residues 83–178 (HTFCVVEQPE…NVTRIAYGIT (96 aa)) form the Toprim domain.

This sequence belongs to the RecR family.

May play a role in DNA repair. It seems to be involved in an RecBC-independent recombinational process of DNA repair. It may act with RecF and RecO. The polypeptide is Recombination protein RecR (Leptospira interrogans serogroup Icterohaemorrhagiae serovar copenhageni (strain Fiocruz L1-130)).